Reading from the N-terminus, the 50-residue chain is Parvalbumin (50 aa).

Residues Lys-38–Leu-50 form the EF-hand domain.

Belongs to the parvalbumin family.

Probably regulates the activity of the caudal neurosecretory system. Binds two calcium ions. The protein is Parvalbumin of Scyliorhinus canicula (Small-spotted catshark).